A 101-amino-acid polypeptide reads, in one-letter code: Large ribosomal subunit protein uL24 (101 aa).

It belongs to the universal ribosomal protein uL24 family. In terms of assembly, part of the 50S ribosomal subunit.

In terms of biological role, one of two assembly initiator proteins, it binds directly to the 5'-end of the 23S rRNA, where it nucleates assembly of the 50S subunit. Functionally, one of the proteins that surrounds the polypeptide exit tunnel on the outside of the subunit. This Thermobifida fusca (strain YX) protein is Large ribosomal subunit protein uL24.